Reading from the N-terminus, the 1121-residue chain is Peroxisomal ATPase PEX1 (1121 aa).

Disordered regions lie at residues 187–221 (SISS…NNGE) and 1099–1121 (SGRD…STLM). Low complexity predominate over residues 205 to 217 (SSTSTATGRRSVT).

It belongs to the AAA ATPase family. In terms of assembly, interacts with PEX6; forming the PEX1-PEX6 AAA ATPase complex, which is composed of a heterohexamer formed by a trimer of PEX1-PEX6 dimers.

It is found in the membrane. It catalyses the reaction ATP + H2O = ADP + phosphate + H(+). Component of the PEX1-PEX6 AAA ATPase complex involved in peroxisome biosynthesis. The complex acts as a protein dislocase complex that mediates the ATP-dependent extraction of the PEX5 receptor from peroxisomal membranes, an essential step for PEX5 recycling. Specifically recognizes PEX5 monoubiquitinated at 'Cys-6', and pulls it out of the peroxisome lumen through the PEX2-PEX10-PEX12 retrotranslocation channel. Extraction by the PEX1-PEX6 AAA ATPase complex is accompanied by unfolding of the TPR repeats and release of bound cargo from PEX5. In Komagataella phaffii (strain GS115 / ATCC 20864) (Yeast), this protein is Peroxisomal ATPase PEX1.